Reading from the N-terminus, the 334-residue chain is Ferredoxin--NADP reductase (334 aa).

Positions 32, 40, 45, 85, 120, 287, and 327 each coordinate FAD.

This sequence belongs to the ferredoxin--NADP reductase type 2 family. As to quaternary structure, homodimer. FAD serves as cofactor.

The enzyme catalyses 2 reduced [2Fe-2S]-[ferredoxin] + NADP(+) + H(+) = 2 oxidized [2Fe-2S]-[ferredoxin] + NADPH. This chain is Ferredoxin--NADP reductase, found in Wolbachia pipientis subsp. Culex pipiens (strain wPip).